Reading from the N-terminus, the 311-residue chain is Lipid A biosynthesis acyltransferase (311 aa).

Residues 19–39 form a helical membrane-spanning segment; it reads WLFWLGVAIWRSILCLPYPIL. The HXXXXD motif motif lies at 134–139; that stretch reads HFLTLE.

It belongs to the LpxL/LpxM/LpxP family.

It is found in the cell inner membrane. It catalyses the reaction an alpha-Kdo-(2-&gt;4)-alpha-Kdo-(2-&gt;6)-lipid IVA + a fatty acyl-[ACP] = an alpha-Kdo-(2-&gt;4)-alpha-Kdo-(2-&gt;6)-(acyl)-lipid IVA + holo-[ACP]. Its pathway is glycolipid biosynthesis; KDO(2)-lipid A biosynthesis; KDO(2)-lipid A from CMP-3-deoxy-D-manno-octulosonate and lipid IV(A): step 3/4. The protein operates within bacterial outer membrane biogenesis; lipopolysaccharide biosynthesis. Catalyzes the transfer of an acyl chain from an acyl-[acyl-carrier-protein] (ACP) to a Kdo(2)-lipid IV(A) to form a Kdo(2)-(acyl)-lipid IV(A). The protein is Lipid A biosynthesis acyltransferase of Haemophilus influenzae (strain ATCC 51907 / DSM 11121 / KW20 / Rd).